A 359-amino-acid chain; its full sequence is Ribosomal RNA small subunit methyltransferase H (359 aa).

Residues 39–41, Asp58, Phe87, Asp108, and Gln115 each bind S-adenosyl-L-methionine; that span reads AGH. The segment at 339–359 is disordered; that stretch reads IQGSASPGRAKNTARIRTRRG. Over residues 350–359 the composition is skewed to basic residues; the sequence is NTARIRTRRG.

The protein belongs to the methyltransferase superfamily. RsmH family.

It localises to the cytoplasm. It catalyses the reaction cytidine(1402) in 16S rRNA + S-adenosyl-L-methionine = N(4)-methylcytidine(1402) in 16S rRNA + S-adenosyl-L-homocysteine + H(+). Specifically methylates the N4 position of cytidine in position 1402 (C1402) of 16S rRNA. The protein is Ribosomal RNA small subunit methyltransferase H of Bifidobacterium longum (strain DJO10A).